The chain runs to 271 residues: Vacuolar arginine/histidine antiporter stm1 (271 aa).

The PQ-loop 1 domain occupies 14 to 80 (LTELSSFLGA…GNVSSTVLVL (67 aa)). 3 helical membrane-spanning segments follow: residues 17–37 (LSSFLGALSLGCWVVLLIPQL), 49–69 (ISDLFLIIWLIGDFFNVLGSI), and 77–97 (VLVLSFYYIVSDSTLLMQIYY). Serine 119 is modified (phosphoserine). The next 4 membrane-spanning stretches (helical) occupy residues 144–164 (FGVMGCVVIVSTIVGNLIISS), 178–198 (PFTAGCISSVLYFCARIPQII), 211–231 (IIFFVLASVGNTSYAFSILVF), and 245–265 (PWILGAFSTIFLDIYIFYQFI). The PQ-loop 2 domain maps to 185–239 (SSVLYFCARIPQIIKNHKAKSTEGLSIIFFVLASVGNTSYAFSILVFPASDYLNY).

This sequence belongs to the laat-1 family.

It is found in the vacuole membrane. It carries out the reaction L-histidine(out) + L-arginine(in) = L-histidine(in) + L-arginine(out). In terms of biological role, amino acid transporter that moves basic amino acids across the vacuolar membrane. Appears to function as an arginine/histidine antiporter. The protein is Vacuolar arginine/histidine antiporter stm1 (stm1) of Schizosaccharomyces pombe (strain 972 / ATCC 24843) (Fission yeast).